A 385-amino-acid chain; its full sequence is Sulfoquinovose monooxygenase (385 aa).

Residues 366 to 385 (AYGRVPSETPATPLGNGERH) are disordered.

It belongs to the SsuD family. In terms of assembly, homodimer.

The enzyme catalyses 6-sulfo-D-quinovose + FMNH2 + O2 = 6-dehydro-D-glucose + FMN + sulfite + H2O + 2 H(+). Functionally, part of the sulfoquinovose monooxygenase (sulfo-SMO) pathway, a D-sulfoquinovose degradation pathway that enables the complete utilization of all carbons within sulfoquinovose (SQ) with concomitant production of inorganic sulfite. Catalyzes the oxidative desulfurization of sulfoquinovose to sulfite and 6-dehydro-D-glucose. Is highly specific for sulfoquinovose and cannot use sulfoquinovosyl glycerol. FMNH(2) is provided by the FMN reductase SmoA. The chain is Sulfoquinovose monooxygenase from Agrobacterium fabrum (strain C58 / ATCC 33970) (Agrobacterium tumefaciens (strain C58)).